The chain runs to 424 residues: Histidine--tRNA ligase (424 aa).

It belongs to the class-II aminoacyl-tRNA synthetase family. As to quaternary structure, homodimer.

It is found in the cytoplasm. The catalysed reaction is tRNA(His) + L-histidine + ATP = L-histidyl-tRNA(His) + AMP + diphosphate + H(+). This chain is Histidine--tRNA ligase, found in Shigella flexneri.